We begin with the raw amino-acid sequence, 713 residues long: Low-density lipoprotein receptor-related protein 10 (713 aa).

An N-terminal signal peptide occupies residues M1–A16. The Extracellular segment spans residues H17–K440. 2 cysteine pairs are disulfide-bonded: C28/C57 and C80/C98. Residues C28–D136 enclose the CUB 1 domain. A glycan (N-linked (GlcNAc...) asparagine) is linked at N56. The N-linked (GlcNAc...) asparagine glycan is linked to N111. The LDL-receptor class A 1 domain maps to M139–S175. Cystine bridges form between C140/C152, C147/C165, C159/C174, and C192/C220. One can recognise a CUB 2 domain in the interval C192–R305. N-linked (GlcNAc...) asparagine glycosylation is found at N193 and N299. 3 consecutive LDL-receptor class A domains span residues Y307–P354, G355–R397, and H398–S434. Intrachain disulfides connect C308–C331, C315–C344, C338–C353, C356–C374, C363–C387, C381–C396, C399–C411, C406–C424, and C418–C433. The helical transmembrane segment at V441–G461 threads the bilayer. The Cytoplasmic portion of the chain corresponds to C462–T713. Positions G564–A637 are disordered. The span at T569–P584 shows a compositional bias: polar residues. T596 is modified (phosphothreonine). Over residues P621–E636 the composition is skewed to low complexity.

It belongs to the LDLR family. Expressed in blood leukocyte, lung, placenta, small intestine, liver, kidney, spleen, thymus, colon, skeletal muscle and heart.

It localises to the membrane. It is found in the coated pit. Probable receptor, which is involved in the internalization of lipophilic molecules and/or signal transduction. May be involved in the uptake of lipoprotein APOE in liver. The chain is Low-density lipoprotein receptor-related protein 10 (LRP10) from Homo sapiens (Human).